We begin with the raw amino-acid sequence, 557 residues long: Membrane protein insertase YidC (557 aa).

A helical transmembrane segment spans residues 1 to 21 (MNWLRNSLIAAILVITYVLFI). The segment at 52–71 (SDDAVASSATEESDVPEVSV) is disordered. A run of 5 helical transmembrane segments spans residues 346-366 (TIDY…LDFI), 369-389 (LVGN…AVFF), 439-459 (FGGC…YWMI), 470-490 (FFLW…PLLM), and 517-537 (PIGF…YWVV).

The protein belongs to the OXA1/ALB3/YidC family. Type 1 subfamily. Interacts with the Sec translocase complex via SecD. Specifically interacts with transmembrane segments of nascent integral membrane proteins during membrane integration.

Its subcellular location is the cell inner membrane. Its function is as follows. Required for the insertion and/or proper folding and/or complex formation of integral membrane proteins into the membrane. Involved in integration of membrane proteins that insert both dependently and independently of the Sec translocase complex, as well as at least some lipoproteins. Aids folding of multispanning membrane proteins. In Saccharophagus degradans (strain 2-40 / ATCC 43961 / DSM 17024), this protein is Membrane protein insertase YidC.